Consider the following 402-residue polypeptide: MSSQRPPRPLDDVRVLELGAFLAGPFCGQLLADFGAEVIKVEPPGKGDPMREWGRHRYKGRTLWWPVLARNKKSITIDLRTPEGQALVKRLVPHVDMVLENFRPGTLEEWGLGWEELHALNPGLIMIRVSGFGQTGPYRDKAGFGSIGEAMGGIRAITGFPDRPPTRIGISIGDSLAATFAALGALVALHQRQRSGQGQVVDIGIYEGVLALMESMIPEYQLTGHIRERTGNILPNVAPSNIYPTADGSWFVIGANADTIFTRLAQAMGQPELATDPRFATHQARGEHQAELDDLIAAWTLNYTADQLQVMMDEYGVPAGRIYTAKEMLSDPHFIARQSIIGVHDPDLGEIKMQNVVPRLSATPGGVDWTGPALGQHNREIFTDLLGLTEDDLAMLQAKRVI.

The Nucleophile role is filled by aspartate 174.

It belongs to the CoA-transferase III family. Homodimer.

The catalysed reaction is (3R)-citramalate + succinyl-CoA = (3R)-citramalyl-CoA + succinate. It carries out the reaction (R)-malate + succinyl-CoA = (R)-malyl-CoA + succinate. In terms of biological role, involved in the 3-hydroxypropionate cycle used for autotrophic carbon dioxide fixation, and in the glyoxylate assimilation cycle used to regenerate acetyl-CoA and produce pyruvate as universal precursor for biosynthesis. Catalyzes the transfer of CoA moiety from succinyl-CoA to D-citramalate to yield citramalyl-CoA. The polypeptide is Succinyl-CoA--D-citramalate CoA-transferase (Chloroflexus aurantiacus (strain ATCC 29366 / DSM 635 / J-10-fl)).